The primary structure comprises 419 residues: UDP-N-acetylglucosamine 1-carboxyvinyltransferase (419 aa).

Position 22–23 (22–23 (KN)) interacts with phosphoenolpyruvate. Residue R93 coordinates UDP-N-acetyl-alpha-D-glucosamine. C117 serves as the catalytic Proton donor. Position 117 is a 2-(S-cysteinyl)pyruvic acid O-phosphothioketal (C117). Residues D306 and I328 each coordinate UDP-N-acetyl-alpha-D-glucosamine.

Belongs to the EPSP synthase family. MurA subfamily.

Its subcellular location is the cytoplasm. The catalysed reaction is phosphoenolpyruvate + UDP-N-acetyl-alpha-D-glucosamine = UDP-N-acetyl-3-O-(1-carboxyvinyl)-alpha-D-glucosamine + phosphate. Its pathway is cell wall biogenesis; peptidoglycan biosynthesis. Cell wall formation. Adds enolpyruvyl to UDP-N-acetylglucosamine. This Idiomarina loihiensis (strain ATCC BAA-735 / DSM 15497 / L2-TR) protein is UDP-N-acetylglucosamine 1-carboxyvinyltransferase.